The chain runs to 101 residues: Small ribosomal subunit protein cS23 (101 aa).

The protein belongs to the chloroplast-specific ribosomal protein cS23 family. As to quaternary structure, part of the 30S ribosomal subunit.

It is found in the plastid. It localises to the chloroplast. Functionally, probably a ribosomal protein or a ribosome-associated protein. The polypeptide is Small ribosomal subunit protein cS23 (ycf65) (Euglena stellata).